We begin with the raw amino-acid sequence, 341 residues long: tRNA (guanine-N(7)-)-methyltransferase (341 aa).

4 residues coordinate S-adenosyl-L-methionine: Glu75, Glu100, Asp127, and Asp150. Residue Asp150 is part of the active site. Lys154 serves as a coordination point for substrate. The segment at 156–161 (RHNKRR) is interaction with RNA. A substrate-binding site is contributed by Asp186.

This sequence belongs to the class I-like SAM-binding methyltransferase superfamily. TrmB family.

It catalyses the reaction guanosine(46) in tRNA + S-adenosyl-L-methionine = N(7)-methylguanosine(46) in tRNA + S-adenosyl-L-homocysteine. It functions in the pathway tRNA modification; N(7)-methylguanine-tRNA biosynthesis. Its function is as follows. Catalyzes the formation of N(7)-methylguanine at position 46 (m7G46) in tRNA. In Xanthomonas euvesicatoria pv. vesicatoria (strain 85-10) (Xanthomonas campestris pv. vesicatoria), this protein is tRNA (guanine-N(7)-)-methyltransferase.